The chain runs to 342 residues: Ubiquitin fusion degradation protein 1 homolog (342 aa).

Disordered regions lie at residues 245 to 276 (FGGA…SNAA) and 318 to 342 (EKEA…RGAR). Over residues 259–275 (SSSVSLSDGTGVSTSNA) the composition is skewed to polar residues.

This sequence belongs to the UFD1 family. In terms of assembly, forms a complex composed of ubxn-3, ufd-1, npl-4.1 and cdc-48.1; within the complex interacts with cdc-48.1. Interacts with cdc-48.2. Interacts with npl-4.1 and/or npl-4.2.

Its subcellular location is the cytoplasm. It is found in the nucleus. Its function is as follows. Functions at a post-ubiquitination step in the ubiquitin fusion degradation (UFD) pathway. In association with npl-4.1 and/or npl-4.2 and ATPase cdc-48.1 and/or cdc-48.2, involved in the cytoplasmic elimination of misfolded proteins exported from the ER. This pathway, known as ERAD, prevents the activation of the unfolded protein response (UPR) caused by the accumulation of misfolded proteins in the ER. During S phase and in association with npl-4.1 and/or npl-4.2, cdc-48.1 and/or cdc-48.2 and ubxn-3, ensures the degradation of DNA licensing factor cdt-1 after the initiation of DNA replication and thus the disassembly of the DNA replication CMG helicase complex by promoting the dissociation from chromatin of several of its components including cdc-45 and sld-5. Regulates ubxn-3 nuclear localization during S phase. This Caenorhabditis elegans protein is Ubiquitin fusion degradation protein 1 homolog (ufd-1).